The sequence spans 302 residues: Meiotically up-regulated gene 129 protein (302 aa).

In terms of biological role, has a role in meiosis. In Schizosaccharomyces pombe (strain 972 / ATCC 24843) (Fission yeast), this protein is Meiotically up-regulated gene 129 protein (mug129).